The following is an 867-amino-acid chain: Protein translocase subunit SecA (867 aa).

Residues Gln86, 104-108 (GEGKT), and Asp499 each bind ATP. Residues Cys848, Cys850, Cys859, and His860 each coordinate Zn(2+).

It belongs to the SecA family. Monomer and homodimer. Part of the essential Sec protein translocation apparatus which comprises SecA, SecYEG and auxiliary proteins SecDF-YajC and YidC. It depends on Zn(2+) as a cofactor.

The protein resides in the cell membrane. It localises to the cytoplasm. It carries out the reaction ATP + H2O + cellular proteinSide 1 = ADP + phosphate + cellular proteinSide 2.. Functionally, part of the Sec protein translocase complex. Interacts with the SecYEG preprotein conducting channel. Has a central role in coupling the hydrolysis of ATP to the transfer of proteins into and across the cell membrane, serving both as a receptor for the preprotein-SecB complex and as an ATP-driven molecular motor driving the stepwise translocation of polypeptide chains across the membrane. The polypeptide is Protein translocase subunit SecA (Wolbachia sp. subsp. Brugia malayi (strain TRS)).